We begin with the raw amino-acid sequence, 357 residues long: Probable GTP 3',8-cyclase (357 aa).

The Radical SAM core domain occupies 5–234; it reads DFGRDVSGVR…DRRRYWVSSR (230 aa). Arg-14 is a GTP binding site. [4Fe-4S] cluster contacts are provided by Cys-21 and Cys-25. An S-adenosyl-L-methionine-binding site is contributed by Tyr-27. Cys-28 contributes to the [4Fe-4S] cluster binding site. Residue Lys-68 coordinates GTP. Gly-72 contacts S-adenosyl-L-methionine. A GTP-binding site is contributed by Thr-96. Ser-120 is a binding site for S-adenosyl-L-methionine. A GTP-binding site is contributed by Lys-157. A disordered region spans residues 232–256; it reads SSRDAGSTADDAAQSVTPDGGAHPD. [4Fe-4S] cluster-binding residues include Cys-272 and Cys-275. Residue 277–279 participates in GTP binding; the sequence is RVR. Cys-289 is a [4Fe-4S] cluster binding site.

It belongs to the radical SAM superfamily. MoaA family. Requires [4Fe-4S] cluster as cofactor.

The catalysed reaction is GTP + AH2 + S-adenosyl-L-methionine = (8S)-3',8-cyclo-7,8-dihydroguanosine 5'-triphosphate + 5'-deoxyadenosine + L-methionine + A + H(+). It functions in the pathway cofactor biosynthesis; molybdopterin biosynthesis. Catalyzes the cyclization of GTP to (8S)-3',8-cyclo-7,8-dihydroguanosine 5'-triphosphate. The chain is Probable GTP 3',8-cyclase from Halobacterium salinarum (strain ATCC 29341 / DSM 671 / R1).